We begin with the raw amino-acid sequence, 255 residues long: Indole-3-glycerol phosphate synthase (255 aa).

Belongs to the TrpC family.

The catalysed reaction is 1-(2-carboxyphenylamino)-1-deoxy-D-ribulose 5-phosphate + H(+) = (1S,2R)-1-C-(indol-3-yl)glycerol 3-phosphate + CO2 + H2O. It functions in the pathway amino-acid biosynthesis; L-tryptophan biosynthesis; L-tryptophan from chorismate: step 4/5. In Streptococcus pneumoniae serotype 2 (strain D39 / NCTC 7466), this protein is Indole-3-glycerol phosphate synthase.